The primary structure comprises 135 residues: ATP synthase epsilon chain (135 aa).

This sequence belongs to the ATPase epsilon chain family. In terms of assembly, F-type ATPases have 2 components, CF(1) - the catalytic core - and CF(0) - the membrane proton channel. CF(1) has five subunits: alpha(3), beta(3), gamma(1), delta(1), epsilon(1). CF(0) has three main subunits: a, b and c.

It is found in the cellular thylakoid membrane. In terms of biological role, produces ATP from ADP in the presence of a proton gradient across the membrane. This is ATP synthase epsilon chain from Prochlorococcus marinus (strain NATL1A).